Reading from the N-terminus, the 316-residue chain is Ribosomal RNA small subunit methyltransferase H (316 aa).

S-adenosyl-L-methionine is bound by residues 39 to 41 (GGH), D56, F82, D103, and Q110.

This sequence belongs to the methyltransferase superfamily. RsmH family.

It is found in the cytoplasm. It catalyses the reaction cytidine(1402) in 16S rRNA + S-adenosyl-L-methionine = N(4)-methylcytidine(1402) in 16S rRNA + S-adenosyl-L-homocysteine + H(+). Functionally, specifically methylates the N4 position of cytidine in position 1402 (C1402) of 16S rRNA. The polypeptide is Ribosomal RNA small subunit methyltransferase H (Methylacidiphilum infernorum (isolate V4) (Methylokorus infernorum (strain V4))).